Reading from the N-terminus, the 992-residue chain is Presequence protease, mitochondrial (992 aa).

Residues 1-30 (MNYAKLSIAFSKKTIKTHNCRLFQRWLHVG) constitute a mitochondrion transit peptide. Histidine 91 contributes to the Zn(2+) binding site. Glutamate 94 (proton acceptor) is an active-site residue. Histidine 95 is a binding site for Zn(2+). Residue glutamate 167 is part of the active site. Glutamate 192 is a binding site for Zn(2+).

Belongs to the peptidase M16 family. PreP subfamily. Monomer and homodimer; homodimerization is induced by binding of the substrate. Zn(2+) is required as a cofactor.

Its subcellular location is the mitochondrion intermembrane space. The protein localises to the mitochondrion matrix. Functionally, degrades mitochondrial transit peptides after their cleavage in the intermembrane space or in the matrix, and presequence peptides; clearance of these peptides is required to keep the presequence processing machinery running. Preferentially cleaves the N-terminal side of paired basic amino acid residues. Also degrades other unstructured peptides. May function as an ATP-dependent peptidase as opposed to a metalloendopeptidase. This Schizosaccharomyces pombe (strain 972 / ATCC 24843) (Fission yeast) protein is Presequence protease, mitochondrial (cym1).